Reading from the N-terminus, the 853-residue chain is Translation initiation factor IF-2 (853 aa).

Disordered regions lie at residues 1–68 (MSDT…ASDG) and 94–265 (LEQR…DKTS). Residues 20–32 (RKTSGTVKQSFSH) are compositionally biased toward polar residues. Basic and acidic residues predominate over residues 94-161 (LEQRKAEEAS…ASREAVERPS (68 aa)). Residues 163–176 (APRAAPAAQTPPAA) are compositionally biased toward low complexity. Basic and acidic residues-rich tracts occupy residues 196-219 (PARD…DAER) and 245-265 (RARE…DKTS). One can recognise a tr-type G domain in the interval 347-515 (PRAPIVTIMG…AISIQAEILE (169 aa)). The interval 356-363 (GHVDHGKT) is G1. Position 356-363 (356-363 (GHVDHGKT)) interacts with GTP. The interval 381-385 (GITQH) is G2. The tract at residues 403–406 (DTPG) is G3. Residues 403–407 (DTPGH) and 457–460 (TKSD) contribute to the GTP site. The segment at 457–460 (TKSD) is G4. A G5 region spans residues 493-495 (SAK).

The protein belongs to the TRAFAC class translation factor GTPase superfamily. Classic translation factor GTPase family. IF-2 subfamily.

The protein resides in the cytoplasm. Its function is as follows. One of the essential components for the initiation of protein synthesis. Protects formylmethionyl-tRNA from spontaneous hydrolysis and promotes its binding to the 30S ribosomal subunits. Also involved in the hydrolysis of GTP during the formation of the 70S ribosomal complex. In Hyphomonas neptunium (strain ATCC 15444), this protein is Translation initiation factor IF-2.